The following is an 878-amino-acid chain: F-box DNA helicase protein 1 (878 aa).

The 49-residue stretch at 8–56 (SCKFYRLPLEIIPLICRFLSVQDIQSFIRVFPSFQTILDSSNDLFWKKK) folds into the F-box domain.

Belongs to the helicase family. UvrD subfamily. In terms of assembly, part of the E3 ubiquitin ligase Skp1-Cullin-1-F-box (SCF) complex. Interacts with skp1 and ssb1. Mg(2+) serves as cofactor. It depends on Mn(2+) as a cofactor.

Its subcellular location is the cytoplasm. The protein resides in the nucleus. The enzyme catalyses Couples ATP hydrolysis with the unwinding of duplex DNA by translocating in the 3'-5' direction.. It catalyses the reaction ATP + H2O = ADP + phosphate + H(+). Its pathway is protein modification; protein ubiquitination. Its function is as follows. Involved in ATP-dependent DNA-unwinding in a 3' to 5' direction, and ATP-ase activities stimulated by the single-stranded DNA-binding protein ssb1. Essential for viability and normal growth of stationary phase cells and in the absence of either srs2 or rqh1 DNA helicase. Involved in DNA recombination repair of strand breaks and stalled or collapsed replication forks, on the rhp51-dependent pathway: promotes rhp51 filament dissolution from stalled forks, thereby inhibiting homologous recombination and preventing excessive recombination. Ubiquitination and DNA helicase activities are essential for controlling rhp51-dependent recombination in the absence of rad22. Plays a role in the processing of toxic recombination intermediates. Promotes proper chromosome segregation. The protein is F-box DNA helicase protein 1 (fbh1) of Schizosaccharomyces pombe (strain 972 / ATCC 24843) (Fission yeast).